Reading from the N-terminus, the 511-residue chain is Bifunctional purine biosynthesis protein PurH (511 aa).

An MGS-like domain is found at 1–145 (MKRRALVSVS…KNHQHVTVVV (145 aa)).

Belongs to the PurH family.

It carries out the reaction (6R)-10-formyltetrahydrofolate + 5-amino-1-(5-phospho-beta-D-ribosyl)imidazole-4-carboxamide = 5-formamido-1-(5-phospho-D-ribosyl)imidazole-4-carboxamide + (6S)-5,6,7,8-tetrahydrofolate. It catalyses the reaction IMP + H2O = 5-formamido-1-(5-phospho-D-ribosyl)imidazole-4-carboxamide. Its pathway is purine metabolism; IMP biosynthesis via de novo pathway; 5-formamido-1-(5-phospho-D-ribosyl)imidazole-4-carboxamide from 5-amino-1-(5-phospho-D-ribosyl)imidazole-4-carboxamide (10-formyl THF route): step 1/1. It functions in the pathway purine metabolism; IMP biosynthesis via de novo pathway; IMP from 5-formamido-1-(5-phospho-D-ribosyl)imidazole-4-carboxamide: step 1/1. In Halalkalibacterium halodurans (strain ATCC BAA-125 / DSM 18197 / FERM 7344 / JCM 9153 / C-125) (Bacillus halodurans), this protein is Bifunctional purine biosynthesis protein PurH.